Reading from the N-terminus, the 412-residue chain is DnaJ homolog subfamily A member 2 (412 aa).

One can recognise a J domain in the interval 8-70; it reads KLYDILGVPP…EKRELYDRYG (63 aa). Lys39 carries the post-translational modification N6-acetyllysine. Phosphoserine is present on residues Ser78 and Ser123. The CR-type zinc finger occupies 130-214; the sequence is GKTTKLQLSK…CEGKKVIKEV (85 aa). A Glycyl lysine isopeptide (Lys-Gly) (interchain with G-Cter in SUMO2) cross-link involves residue Lys134. The Zn(2+) site is built by Cys143 and Cys146. The CXXCXGXG motif repeat unit spans residues 143–150; it reads CSACSGQG. An N6-acetyllysine modification is found at Lys152. Zn(2+)-binding residues include Cys159, Cys162, Cys186, Cys189, Cys202, and Cys205. CXXCXGXG motif repeat units follow at residues 159 to 166, 186 to 193, and 202 to 209; these read CSACRGRG, CSDCNGEG, and CKKCEGKK. Residues 365 to 412 form a disordered region; it reads IGETEEVELQEFDSTRGSGGGQRREAYNDSSDEESSSHHGPGVQCAHQ. Tyr391 is subject to Phosphotyrosine. Phosphoserine is present on residues Ser394 and Ser395. Residue Cys409 is modified to Cysteine methyl ester. A lipid anchor (S-farnesyl cysteine) is attached at Cys409. The propeptide at 410–412 is removed in mature form; sequence AHQ.

The protein resides in the membrane. Co-chaperone of Hsc70. Stimulates ATP hydrolysis and the folding of unfolded proteins mediated by HSPA1A/B (in vitro). The sequence is that of DnaJ homolog subfamily A member 2 (DNAJA2) from Homo sapiens (Human).